The primary structure comprises 162 residues: NADH-quinone oxidoreductase subunit I (162 aa).

4Fe-4S ferredoxin-type domains are found at residues 53 to 83 and 93 to 122; these read LRRY…IESE and TRYD…ETHI. Residues cysteine 63, cysteine 66, cysteine 69, cysteine 73, cysteine 102, cysteine 105, cysteine 108, and cysteine 112 each contribute to the [4Fe-4S] cluster site.

This sequence belongs to the complex I 23 kDa subunit family. As to quaternary structure, NDH-1 is composed of 14 different subunits. Subunits NuoA, H, J, K, L, M, N constitute the membrane sector of the complex. It depends on [4Fe-4S] cluster as a cofactor.

It localises to the cell inner membrane. It catalyses the reaction a quinone + NADH + 5 H(+)(in) = a quinol + NAD(+) + 4 H(+)(out). Functionally, NDH-1 shuttles electrons from NADH, via FMN and iron-sulfur (Fe-S) centers, to quinones in the respiratory chain. The immediate electron acceptor for the enzyme in this species is believed to be ubiquinone. Couples the redox reaction to proton translocation (for every two electrons transferred, four hydrogen ions are translocated across the cytoplasmic membrane), and thus conserves the redox energy in a proton gradient. This is NADH-quinone oxidoreductase subunit I from Bordetella bronchiseptica (strain ATCC BAA-588 / NCTC 13252 / RB50) (Alcaligenes bronchisepticus).